Reading from the N-terminus, the 99-residue chain is Bublin coiled-coil protein (99 aa).

Positions L34–Q71 form a coiled coil. The span at R66 to D78 shows a compositional bias: basic and acidic residues. Positions R66–D99 are disordered.

The protein belongs to the UPF0184 (EST00098) family.

Its subcellular location is the cell junction. The protein localises to the cytoplasm. It is found in the cytoskeleton. In terms of biological role, essential for intermediate filament organization in intestinal cells, interacts with intermediate filament and regulates intestinal lumen morphology. This is Bublin coiled-coil protein (bbln) from Danio rerio (Zebrafish).